The chain runs to 190 residues: Elongation factor P-like protein (190 aa).

Belongs to the elongation factor P family.

The sequence is that of Elongation factor P-like protein from Pectobacterium atrosepticum (strain SCRI 1043 / ATCC BAA-672) (Erwinia carotovora subsp. atroseptica).